The primary structure comprises 182 residues: Large ribosomal subunit protein uL6 (182 aa).

Belongs to the universal ribosomal protein uL6 family. Part of the 50S ribosomal subunit.

This protein binds to the 23S rRNA, and is important in its secondary structure. It is located near the subunit interface in the base of the L7/L12 stalk, and near the tRNA binding site of the peptidyltransferase center. The polypeptide is Large ribosomal subunit protein uL6 (Methanococcus vannielii).